The following is a 181-amino-acid chain: Protein TrbB (181 aa).

Positions 1 to 22 (MSLTKSLLFTLLLSAAAVQAST) are cleaved as a signal peptide. The 136-residue stretch at 37-172 (TQPAQPAAGT…FMARVDTVLQ (136 aa)) folds into the Thioredoxin domain.

The protein localises to the periplasm. This Escherichia coli (strain K12) protein is Protein TrbB (trbB).